A 142-amino-acid polypeptide reads, in one-letter code: Protein spalt-accessory (142 aa).

An N-terminal signal peptide occupies residues 1–16 (MKLLIALFVLVNAVIA). Residues 65 to 77 (GQGGVSPGQGGFA) are compositionally biased toward gly residues. A disordered region spans residues 65-142 (GQGGVSPGQG…HHEHHGHHRH (78 aa)). Positions 112 to 124 (NHHEYPEHHGDHH) are enriched in basic and acidic residues. Residues 125–142 (REHHEHHGHHEHHGHHRH) are compositionally biased toward basic residues.

It is found in the secreted. Likely to be involved in the establishment of the head. The protein is Protein spalt-accessory (sala) of Drosophila orena (Fruit fly).